Consider the following 295-residue polypeptide: Fatty acid desaturase 4-like 1, chloroplastic (295 aa).

The transit peptide at 1–29 directs the protein to the chloroplast; that stretch reads MAVSFQTKNPLRPITNIPRSYGPTRVRVT. 3 helical membrane-spanning segments follow: residues 72–92, 102–122, and 175–195; these read WVAA…IGGF, LACY…HWAI, and LAIN…CILL.

The protein belongs to the fatty acid desaturase CarF family.

Its subcellular location is the plastid. It localises to the chloroplast membrane. Its pathway is lipid metabolism; fatty acid metabolism. Fatty acid desaturase involved in the production of chloroplast-specific phosphatidylglycerol molecular species. Catalyzes the formation of a trans double bond introduced close to the carboxyl group of palmitic acid, which is specifically esterified to the sn-2 glyceryl carbon of phosphatidylglycerol. This Arabidopsis thaliana (Mouse-ear cress) protein is Fatty acid desaturase 4-like 1, chloroplastic (FAD4L1).